We begin with the raw amino-acid sequence, 103 residues long: Protein reprimo A (103 aa).

Residues 50 to 70 (IVQIAVMCVLSLTVVFGIFFL) traverse the membrane as a helical segment.

This sequence belongs to the reprimo family.

Its subcellular location is the cytoplasm. It is found in the membrane. Its function is as follows. May be involved in the regulation of p53-dependent G2 arrest of the cell cycle. This is Protein reprimo A from Danio rerio (Zebrafish).